Reading from the N-terminus, the 192-residue chain is Protein CREG1 (192 aa).

The first 18 residues, M1–G18, serve as a signal peptide directing secretion. N-linked (GlcNAc...) asparagine glycans are attached at residues N95, N133, and N166.

It belongs to the CREG family.

Its subcellular location is the secreted. Its function is as follows. May contribute to the transcriptional control of cell growth and differentiation. The polypeptide is Protein CREG1 (CREG1) (Gallus gallus (Chicken)).